The following is a 542-amino-acid chain: Probable quinate permease (542 aa).

Residues 1 to 22 are Cytoplasmic-facing; sequence MSILALVEDRPTPKEVYNWKIY. Residues 23-43 form a helical membrane-spanning segment; it reads LLAAVASFTSCMIGYDSAFIG. Residues 44–74 are Extracellular-facing; the sequence is TTLALSSFREEFGFSTMSKTAVNLVSANIVS. A helical membrane pass occupies residues 75 to 95; that stretch reads CYQAGAFFGAFFAYPIGHFWG. Over 96–97 the chain is Cytoplasmic; it reads RK. Residues 98 to 118 form a helical membrane-spanning segment; the sequence is WGLLFAGTIFTLGAGLMLGAN. At 119–130 the chain is on the extracellular side; sequence GDRGLGLLYGGR. A helical membrane pass occupies residues 131-151; sequence VLAGLGVGAGSNITPIYISEM. Over 152-159 the chain is Cytoplasmic; sequence APPSIRGR. The chain crosses the membrane as a helical span at residues 160–180; the sequence is LVGVYELGWQIGGLVGFWINY. Topologically, residues 181–193 are extracellular; it reads GVSETLAPSHKQW. The helical transmembrane segment at 194–214 threads the bilayer; that stretch reads IIPFAVQLIPSGLLLIGAVFL. Over 215-285 the chain is Cytoplasmic; it reads KESPRWLFSR…AGTNKKVMYR (71 aa). The helical transmembrane segment at 286–306 threads the bilayer; it reads LFLGSMLFFWQNGSGINAINY. At 307–325 the chain is on the extracellular side; sequence YSPTVFKSIGLHGANTSMF. Residues 326–346 form a helical membrane-spanning segment; sequence STGIFGVVKTVVTFVWLLYLI. At 347-352 the chain is on the cytoplasmic side; the sequence is DRVGRR. Residues 353–373 traverse the membrane as a helical segment; the sequence is LLLLIGAAGAAVCLLIVGAYI. The Extracellular segment spans residues 374–387; that stretch reads KIADPASNPTQEMT. Residues 388–408 form a helical membrane-spanning segment; sequence GGGIAAMFFFYLYTVFYTPSW. The Cytoplasmic segment spans residues 409-456; the sequence is NGTPWVMNSEMFEPNMRSLAQACAAASNWLWNFLISRFTPQMFAKMEY. The chain crosses the membrane as a helical span at residues 457–477; it reads GVWFFFASLMLLSIVFVFFLV. Topologically, residues 478-542 are extracellular; sequence PETKGIPLES…EHVSEDLPKV (65 aa). The segment at 523-542 is disordered; that stretch reads GYSKTGEQQVEHVSEDLPKV. The span at 531–542 shows a compositional bias: basic and acidic residues; sequence QVEHVSEDLPKV.

This sequence belongs to the major facilitator superfamily. Sugar transporter (TC 2.A.1.1) family. In terms of assembly, interacts with creB. Post-translationally, ubiquitinated. Deubiquitinated by creB, probably to control its activity or amount.

The protein resides in the cell membrane. In terms of biological role, integral membrane transporter that imports quinic acid to be catabolized as a carbon source. This chain is Probable quinate permease (qutD), found in Aspergillus fumigatus (strain ATCC MYA-4609 / CBS 101355 / FGSC A1100 / Af293) (Neosartorya fumigata).